We begin with the raw amino-acid sequence, 212 residues long: Pyridoxine/pyridoxamine 5'-phosphate oxidase (212 aa).

Substrate is bound by residues 8-11 (RRTY) and Lys66. Residues 61-66 (RIVLLK), 76-77 (FT), Arg82, Lys83, and Gln105 contribute to the FMN site. The substrate site is built by Tyr123, Arg127, and Ser131. Residues 140–141 (QS) and Trp184 contribute to the FMN site. 190–192 (RLH) serves as a coordination point for substrate. Arg194 contacts FMN.

The protein belongs to the pyridoxamine 5'-phosphate oxidase family. Homodimer. Requires FMN as cofactor.

It carries out the reaction pyridoxamine 5'-phosphate + O2 + H2O = pyridoxal 5'-phosphate + H2O2 + NH4(+). The catalysed reaction is pyridoxine 5'-phosphate + O2 = pyridoxal 5'-phosphate + H2O2. The protein operates within cofactor metabolism; pyridoxal 5'-phosphate salvage; pyridoxal 5'-phosphate from pyridoxamine 5'-phosphate: step 1/1. It functions in the pathway cofactor metabolism; pyridoxal 5'-phosphate salvage; pyridoxal 5'-phosphate from pyridoxine 5'-phosphate: step 1/1. Functionally, catalyzes the oxidation of either pyridoxine 5'-phosphate (PNP) or pyridoxamine 5'-phosphate (PMP) into pyridoxal 5'-phosphate (PLP). The chain is Pyridoxine/pyridoxamine 5'-phosphate oxidase from Cupriavidus taiwanensis (strain DSM 17343 / BCRC 17206 / CCUG 44338 / CIP 107171 / LMG 19424 / R1) (Ralstonia taiwanensis (strain LMG 19424)).